A 410-amino-acid chain; its full sequence is Cytochrome P450 105A3 (410 aa).

Cys-359 serves as a coordination point for heme.

Belongs to the cytochrome P450 family. In terms of assembly, monomer. Heme is required as a cofactor.

Functionally, catalyzes the hydroxylation of sodium ML-236B carboxylate to pravastatin. The sequence is that of Cytochrome P450 105A3 (cyp105A3) from Streptomyces carbophilus.